The primary structure comprises 352 residues: tRNA N6-adenosine threonylcarbamoyltransferase (352 aa).

2 residues coordinate Fe cation: His115 and His119. Residues 137–141 (LVSGG), Asp170, Gly183, and Asn281 each bind substrate. Asp309 provides a ligand contact to Fe cation.

The protein belongs to the KAE1 / TsaD family. It depends on Fe(2+) as a cofactor.

Its subcellular location is the cytoplasm. It catalyses the reaction L-threonylcarbamoyladenylate + adenosine(37) in tRNA = N(6)-L-threonylcarbamoyladenosine(37) in tRNA + AMP + H(+). Its function is as follows. Required for the formation of a threonylcarbamoyl group on adenosine at position 37 (t(6)A37) in tRNAs that read codons beginning with adenine. Is involved in the transfer of the threonylcarbamoyl moiety of threonylcarbamoyl-AMP (TC-AMP) to the N6 group of A37, together with TsaE and TsaB. TsaD likely plays a direct catalytic role in this reaction. This chain is tRNA N6-adenosine threonylcarbamoyltransferase, found in Methylocapsa acidiphila.